The sequence spans 136 residues: ATP synthase epsilon chain (136 aa).

Positions 88–136 (DASSAESDLQAARNEVSKMEGQPASADKVKAQQSLDRARARVQAAKNQD) are disordered.

Belongs to the ATPase epsilon chain family. F-type ATPases have 2 components, CF(1) - the catalytic core - and CF(0) - the membrane proton channel. CF(1) has five subunits: alpha(3), beta(3), gamma(1), delta(1), epsilon(1). CF(0) has three main subunits: a, b and c.

It localises to the cellular thylakoid membrane. In terms of biological role, produces ATP from ADP in the presence of a proton gradient across the membrane. The protein is ATP synthase epsilon chain of Synechococcus sp. (strain WH7803).